The primary structure comprises 241 residues: Leucyl/phenylalanyl-tRNA--protein transferase (241 aa).

The protein belongs to the L/F-transferase family.

Its subcellular location is the cytoplasm. The enzyme catalyses N-terminal L-lysyl-[protein] + L-leucyl-tRNA(Leu) = N-terminal L-leucyl-L-lysyl-[protein] + tRNA(Leu) + H(+). It carries out the reaction N-terminal L-arginyl-[protein] + L-leucyl-tRNA(Leu) = N-terminal L-leucyl-L-arginyl-[protein] + tRNA(Leu) + H(+). It catalyses the reaction L-phenylalanyl-tRNA(Phe) + an N-terminal L-alpha-aminoacyl-[protein] = an N-terminal L-phenylalanyl-L-alpha-aminoacyl-[protein] + tRNA(Phe). In terms of biological role, functions in the N-end rule pathway of protein degradation where it conjugates Leu, Phe and, less efficiently, Met from aminoacyl-tRNAs to the N-termini of proteins containing an N-terminal arginine or lysine. This is Leucyl/phenylalanyl-tRNA--protein transferase from Neisseria meningitidis serogroup B (strain ATCC BAA-335 / MC58).